The sequence spans 415 residues: tRNA (cytosine(38)-C(5))-methyltransferase (415 aa).

In terms of domain architecture, SAM-dependent MTase C5-type spans 4 to 396; sequence LRVLELYSGI…TVLCEGFGNA (393 aa). S-adenosyl-L-methionine contacts are provided by residues 13-15, Asp-34, 57-58, and Ser-76; these read IGG and IE. The active site involves Cys-79. Ser-376 serves as a coordination point for S-adenosyl-L-methionine.

It belongs to the class I-like SAM-binding methyltransferase superfamily. C5-methyltransferase family. As to expression, highly expressed in thymus, testis, and at much lower levels in spleen, lung, brain, heart, kidney, liver, skeletal muscle and embryonic stem cells.

Its subcellular location is the cytoplasm. The enzyme catalyses cytidine(38) in tRNA + S-adenosyl-L-methionine = 5-methylcytidine(38) in tRNA + S-adenosyl-L-homocysteine + H(+). In terms of biological role, specifically methylates cytosine 38 in the anticodon loop of tRNA(Asp). Has higher activity on tRNA(Asp) modified with queuosine at position 34. This Mus musculus (Mouse) protein is tRNA (cytosine(38)-C(5))-methyltransferase (Trdmt1).